The sequence spans 388 residues: Phosphoribosylformylglycinamidine cyclo-ligase, chloroplastic/mitochondrial (388 aa).

The protein belongs to the AIR synthase family.

It is found in the plastid. It localises to the chloroplast. The protein resides in the mitochondrion. It carries out the reaction 2-formamido-N(1)-(5-O-phospho-beta-D-ribosyl)acetamidine + ATP = 5-amino-1-(5-phospho-beta-D-ribosyl)imidazole + ADP + phosphate + H(+). It functions in the pathway purine metabolism; IMP biosynthesis via de novo pathway; 5-amino-1-(5-phospho-D-ribosyl)imidazole from N(2)-formyl-N(1)-(5-phospho-D-ribosyl)glycinamide: step 2/2. The chain is Phosphoribosylformylglycinamidine cyclo-ligase, chloroplastic/mitochondrial (PUR5) from Vigna unguiculata (Cowpea).